A 146-amino-acid chain; its full sequence is Large ribosomal subunit protein uL15 (146 aa).

Residues 1–51 are disordered; sequence MKLHELKPAKGSRKVRNRVGRGTSSGNGKTSGRGQKGQKARSGGGVRLGFE. Over residues 10–19 the composition is skewed to basic residues; sequence KGSRKVRNRV. Composition is skewed to gly residues over residues 23–35 and 42–51; these read TSSG…GRGQ and SGGGVRLGFE.

The protein belongs to the universal ribosomal protein uL15 family. As to quaternary structure, part of the 50S ribosomal subunit.

Its function is as follows. Binds to the 23S rRNA. This Streptococcus equi subsp. equi (strain 4047) protein is Large ribosomal subunit protein uL15.